Here is a 228-residue protein sequence, read N- to C-terminus: Uracil-DNA glycosylase (228 aa).

Catalysis depends on Asp64, which acts as the Proton acceptor.

Belongs to the uracil-DNA glycosylase (UDG) superfamily. UNG family.

The protein resides in the cytoplasm. It carries out the reaction Hydrolyzes single-stranded DNA or mismatched double-stranded DNA and polynucleotides, releasing free uracil.. Its function is as follows. Excises uracil residues from the DNA which can arise as a result of misincorporation of dUMP residues by DNA polymerase or due to deamination of cytosine. This Yersinia pseudotuberculosis serotype O:1b (strain IP 31758) protein is Uracil-DNA glycosylase.